The chain runs to 151 residues: 3-hydroxyacyl-[acyl-carrier-protein] dehydratase FabZ (151 aa).

H56 is an active-site residue.

The protein belongs to the thioester dehydratase family. FabZ subfamily.

It is found in the cytoplasm. The catalysed reaction is a (3R)-hydroxyacyl-[ACP] = a (2E)-enoyl-[ACP] + H2O. In terms of biological role, involved in unsaturated fatty acids biosynthesis. Catalyzes the dehydration of short chain beta-hydroxyacyl-ACPs and long chain saturated and unsaturated beta-hydroxyacyl-ACPs. The sequence is that of 3-hydroxyacyl-[acyl-carrier-protein] dehydratase FabZ from Nitrobacter winogradskyi (strain ATCC 25391 / DSM 10237 / CIP 104748 / NCIMB 11846 / Nb-255).